Reading from the N-terminus, the 447-residue chain is ATP-dependent protease ATPase subunit HslU (447 aa).

Residues Ile17, 59 to 64, Asp256, Glu321, and Arg393 contribute to the ATP site; that span reads GVGKTE.

The protein belongs to the ClpX chaperone family. HslU subfamily. A double ring-shaped homohexamer of HslV is capped on each side by a ring-shaped HslU homohexamer. The assembly of the HslU/HslV complex is dependent on binding of ATP.

The protein resides in the cytoplasm. Its function is as follows. ATPase subunit of a proteasome-like degradation complex; this subunit has chaperone activity. The binding of ATP and its subsequent hydrolysis by HslU are essential for unfolding of protein substrates subsequently hydrolyzed by HslV. HslU recognizes the N-terminal part of its protein substrates and unfolds these before they are guided to HslV for hydrolysis. The polypeptide is ATP-dependent protease ATPase subunit HslU (Pseudomonas putida (strain GB-1)).